A 199-amino-acid polypeptide reads, in one-letter code: Charged multivesicular body protein 1b (199 aa).

A coiled-coil region spans residues 26 to 48; it reads DKEEKAEKAKIKKAIQKGNMEVA. The tract at residues 132 to 156 is interaction with IST1; sequence MEDTMSSTTTLTTPQNQVDMLLQEM. The disordered stretch occupies residues 167 to 199; it reads ELPQGQTGSVGTSVASAEQDELSQRLARLRDQV. Positions 170-182 are enriched in polar residues; sequence QGQTGSVGTSVAS. The segment at 174–199 is interaction with SPAST; the sequence is GSVGTSVASAEQDELSQRLARLRDQV. Positions 178-199 form a coiled coil; that stretch reads TSVASAEQDELSQRLARLRDQV. An interaction with VPS4A, MITD1 and STAMBP region spans residues 180-196; that stretch reads VASAEQDELSQRLARLR. The interaction with VTA1 stretch occupies residues 180–199; sequence VASAEQDELSQRLARLRDQV. The interaction with VPS4B stretch occupies residues 183–199; that stretch reads AEQDELSQRLARLRDQV. The MIT-interacting motif signature appears at 186–196; sequence DELSQRLARLR.

It belongs to the SNF7 family. Probable peripherally associated component of the endosomal sorting required for transport complex III (ESCRT-III). ESCRT-III components are thought to multimerize to form a flat lattice on the perimeter membrane of the endosome. Several assembly forms of ESCRT-III may exist that interact and act sequentially. Interacts with CHMP1A. Interacts with VTA1; the interaction probably involves the open conformation of CHMP1B. Interacts with CHMP2A. Interacts with VPS4A; the interaction is direct. Interacts with VPS4B; the interaction is direct. Interacts with SPAST (via MIT domain); the interaction is direct. Interacts with IST1. Interacts with MITD1. Interacts with STAMBP. As to expression, widely expressed. Expressed in pancreas, kidney, skeletal muscle, liver, lung, placenta and brain.

The protein resides in the cytoplasm. The protein localises to the cytosol. Its subcellular location is the endosome. It localises to the late endosome membrane. Functionally, probable peripherally associated component of the endosomal sorting required for transport complex III (ESCRT-III) which is involved in multivesicular bodies (MVBs) formation and sorting of endosomal cargo proteins into MVBs. MVBs contain intraluminal vesicles (ILVs) that are generated by invagination and scission from the limiting membrane of the endosome and mostly are delivered to lysosomes enabling degradation of membrane proteins, such as stimulated growth factor receptors, lysosomal enzymes and lipids. The MVB pathway appears to require the sequential function of ESCRT-O, -I,-II and -III complexes. ESCRT-III proteins mostly dissociate from the invaginating membrane before the ILV is released. The ESCRT machinery also functions in topologically equivalent membrane fission events, such as the terminal stages of cytokinesis and the budding of enveloped viruses (HIV-1 and other lentiviruses). ESCRT-III proteins are believed to mediate the necessary vesicle extrusion and/or membrane fission activities, possibly in conjunction with the AAA ATPase VPS4. Involved in cytokinesis. Involved in recruiting VPS4A and/or VPS4B and SPAST to the midbody of dividing cells. Involved in HIV-1 p6- and p9-dependent virus release. The polypeptide is Charged multivesicular body protein 1b (CHMP1B) (Homo sapiens (Human)).